The primary structure comprises 81 residues: Protein Vpu (81 aa).

Residues 1 to 7 (MSYLLAI) are Extracellular-facing. A helical transmembrane segment spans residues 8 to 28 (GIAALIVALIIAIVVWTIVYI). The Cytoplasmic portion of the chain corresponds to 29–81 (EYKKLVRQRKINKLYKRIRERAEDSGNESEGDAEELAALGEMGPFIPGDINNL). Phosphoserine; by host CK2 occurs at positions 53 and 57.

This sequence belongs to the HIV-1 VPU protein family. In terms of assembly, homopentamer. Interacts with host CD4 and BRTC; these interactions induce proteasomal degradation of CD4. Interacts with host BST2; this interaction leads to the degradation of host BST2. Interacts with host FBXW11. Interacts with host AP1M1; this interaction plays a role in the mistrafficking and subsequent degradation of host BST2. Interacts with host RANBP2; this interaction allows Vpu to down-regulate host BLM sumoylation. Phosphorylated by host CK2. This phosphorylation is necessary for interaction with human BTRC and degradation of CD4.

It localises to the host membrane. With respect to regulation, ion channel activity is inhibited by hexamethylene amiloride in vitro. In terms of biological role, enhances virion budding by targeting host CD4 and Tetherin/BST2 to proteasome degradation. Degradation of CD4 prevents any unwanted premature interactions between viral Env and its host receptor CD4 in the endoplasmic reticulum. Degradation of antiretroviral protein Tetherin/BST2 is important for virion budding, as BST2 tethers new viral particles to the host cell membrane. Mechanistically, Vpu bridges either CD4 or BST2 to BTRC, a substrate recognition subunit of the Skp1/Cullin/F-box protein E3 ubiquitin ligase, induces their ubiquitination and subsequent proteasomal degradation. The alteration of the E3 ligase specificity by Vpu seems to promote the degradation of host IKBKB, leading to NF-kappa-B down-regulation and subsequent apoptosis. Acts as a viroporin that forms an oligomeric ion channel in membranes. Modulates the host DNA repair mechanisms to promote degradation of nuclear viral cDNA in cells that are already productively infected in order to suppress immune sensing and proviral hyper-integration (superinfection). Manipulates PML-NBs and modulates SUMOylation of host BLM protein thereby enhancing its DNA-end processing activity toward viral unintegrated linear DNA. Also inhibits RAD52-mediated homologous repair of viral cDNA, preventing the generation of dead-end circular forms of single copies of the long terminal repeat and permitting sustained nucleolytic attack. This is Protein Vpu from Homo sapiens (Human).